Reading from the N-terminus, the 908-residue chain is DNA mismatch repair protein MutS (908 aa).

ATP is bound at residue 662–669; that stretch reads GPNMGGKS.

It belongs to the DNA mismatch repair MutS family.

In terms of biological role, this protein is involved in the repair of mismatches in DNA. It is possible that it carries out the mismatch recognition step. This protein has a weak ATPase activity. This is DNA mismatch repair protein MutS from Rhizobium etli (strain ATCC 51251 / DSM 11541 / JCM 21823 / NBRC 15573 / CFN 42).